A 44-amino-acid chain; its full sequence is Photosystem I reaction center subunit IX (44 aa).

The helical transmembrane segment at 7–27 threads the bilayer; it reads YLSTAPVLAISWLIFVAGLLI.

It belongs to the PsaJ family.

It localises to the plastid. Its subcellular location is the chloroplast thylakoid membrane. Functionally, may help in the organization of the PsaE and PsaF subunits. The polypeptide is Photosystem I reaction center subunit IX (Larix decidua (European larch)).